The following is a 130-amino-acid chain: Small ribosomal subunit protein uS9 (130 aa).

A disordered region spans residues 98–130; that stretch reads LKRAGMLTRDPRMKERKKPGLKGARRSPQFSKR. Over residues 111–130 the composition is skewed to basic residues; it reads KERKKPGLKGARRSPQFSKR.

The protein belongs to the universal ribosomal protein uS9 family.

In Macrococcus caseolyticus (strain JCSC5402) (Macrococcoides caseolyticum), this protein is Small ribosomal subunit protein uS9.